A 376-amino-acid chain; its full sequence is CC-adding tRNA nucleotidyltransferase (376 aa).

26-29 (GAVR) contacts CTP. Residues Asp39 and Asp41 each coordinate Mg(2+). CTP contacts are provided by residues 94 to 95 (RD), Asn99, 136 to 145 (DPLRMLRAAR), and Arg176.

Belongs to the tRNA nucleotidyltransferase/poly(A) polymerase family. Requires Mg(2+) as cofactor.

The catalysed reaction is a tRNA precursor + 2 CTP = a tRNA with a 3' CC end + 2 diphosphate. TRNA nucleotidyltransferase involved in the synthesis of the tRNA CCA terminus. Adds the two cytidine residues to tRNA. This is CC-adding tRNA nucleotidyltransferase from Shouchella clausii (strain KSM-K16) (Alkalihalobacillus clausii).